A 205-amino-acid chain; its full sequence is MSKRLESKYKINRRLGVNLWGRAKSPVNKREYGPGQHGQRRKQKPSDFSVQLMAKQKLKGYYGNISEKQFRKYYDEAVRRKGDTSENLIDLLERRLDAVVYRLKFAMTPFAARQFVSHGHITVNGRKVNIPSYIVRDEDVIEVREKSKHLAIVLDAAQSGERDVPEYMEVDHRQMKGRFLRAPKLSDVPYPVQMEPNLVIEFYSR.

Positions 26 to 47 (PVNKREYGPGQHGQRRKQKPSD) are disordered. The S4 RNA-binding domain occupies 94-154 (RRLDAVVYRL…EKSKHLAIVL (61 aa)).

This sequence belongs to the universal ribosomal protein uS4 family. Part of the 30S ribosomal subunit. Contacts protein S5. The interaction surface between S4 and S5 is involved in control of translational fidelity.

Its function is as follows. One of the primary rRNA binding proteins, it binds directly to 16S rRNA where it nucleates assembly of the body of the 30S subunit. With S5 and S12 plays an important role in translational accuracy. This is Small ribosomal subunit protein uS4 from Gluconacetobacter diazotrophicus (strain ATCC 49037 / DSM 5601 / CCUG 37298 / CIP 103539 / LMG 7603 / PAl5).